Reading from the N-terminus, the 644-residue chain is Threonine--tRNA ligase (644 aa).

Positions 3-64 constitute a TGS domain; the sequence is EMIRITFPDG…QEDGSISIIT (62 aa). The catalytic stretch occupies residues 245–542; sequence DHRKLGKELE…LIEEYKGAFP (298 aa). 3 residues coordinate Zn(2+): cysteine 338, histidine 389, and histidine 519.

This sequence belongs to the class-II aminoacyl-tRNA synthetase family. As to quaternary structure, homodimer. Zn(2+) serves as cofactor.

The protein resides in the cytoplasm. The enzyme catalyses tRNA(Thr) + L-threonine + ATP = L-threonyl-tRNA(Thr) + AMP + diphosphate + H(+). Catalyzes the attachment of threonine to tRNA(Thr) in a two-step reaction: L-threonine is first activated by ATP to form Thr-AMP and then transferred to the acceptor end of tRNA(Thr). Also edits incorrectly charged L-seryl-tRNA(Thr). In Geobacillus sp. (strain WCH70), this protein is Threonine--tRNA ligase.